Reading from the N-terminus, the 313-residue chain is Ribosomal RNA small subunit methyltransferase H (313 aa).

S-adenosyl-L-methionine contacts are provided by residues 35 to 37, Asp-55, Phe-79, Asp-101, and Gln-108; that span reads GGH.

Belongs to the methyltransferase superfamily. RsmH family.

It is found in the cytoplasm. It catalyses the reaction cytidine(1402) in 16S rRNA + S-adenosyl-L-methionine = N(4)-methylcytidine(1402) in 16S rRNA + S-adenosyl-L-homocysteine + H(+). Functionally, specifically methylates the N4 position of cytidine in position 1402 (C1402) of 16S rRNA. This Escherichia coli O81 (strain ED1a) protein is Ribosomal RNA small subunit methyltransferase H.